A 347-amino-acid polypeptide reads, in one-letter code: Trace amine-associated receptor 4 (347 aa).

Residues 1 to 37 (MNSPDLWYSPETQFCFAAANNSCPRKARPALVVCAMY) are Extracellular-facing. Residue Asn20 is glycosylated (N-linked (GlcNAc...) asparagine). Cystine bridges form between Cys23–Cys187 and Cys106–Cys191. A helical transmembrane segment spans residues 38–58 (LVMIGAIVMTMLGNMVVIISI). The Cytoplasmic portion of the chain corresponds to 59–69 (AHFKQLHSPTN). A helical transmembrane segment spans residues 70–90 (FLILSMATTDFLLSCVVMPFS). Topologically, residues 91–110 (MVRSIESCWYFGDLFCKVHS) are extracellular. The chain crosses the membrane as a helical span at residues 111 to 129 (CCDIMLCTTSIFHLCFISV). Residues 130–149 (DRHYAVCDPLHYVTQITVGV) are Cytoplasmic-facing. The helical transmembrane segment at 150–170 (VGVFLLISWSVPILFAFGLVF) threads the bilayer. The Extracellular segment spans residues 171 to 197 (SELNLIGAEDFVAAIDCTGLCVLIFNK). The tract at residues 175 to 188 (LIGAEDFVAAIDCT) is extracellular Loop 2 (ECL2). The helical transmembrane segment at 198-218 (LWGVLASFIAFFLPGAIMVGI) threads the bilayer. At 219–260 (YIHIFTVARKHARKIGPGPRTKRALSESKMKATSGKESKATK) the chain is on the cytoplasmic side. Residues 261–281 (TLSIVMGVFVLCWLPFFVLTI) traverse the membrane as a helical segment. Topologically, residues 282 to 296 (TDPFIGFTTPEDLYN) are extracellular. A helical transmembrane segment spans residues 297–317 (VFLWLGYFNSTFNPIIYGMFY). Residues 318 to 347 (PWFRKALRMIVTGTIFRSDSSTSSLHPAHP) lie on the Cytoplasmic side of the membrane.

This sequence belongs to the G-protein coupled receptor 1 family.

It localises to the cell membrane. Olfactory receptor specific for 2-phenylethylamine, a trace amine present at high concentration in the urine of carnivore species, playing a key role in fear and avoidance responses. 2-phenylethylamine acts as a kairomone in the chemical detection of carnivore odor and triggers fear in rats. This receptor is probably mediated by the G(s)-class of G-proteins which activate adenylate cyclase. This chain is Trace amine-associated receptor 4, found in Rattus norvegicus (Rat).